The chain runs to 117 residues: MSWRGRSTYYWPRPRRYVQPPEVIGPMRPEQFSDEVEPATPEEGEPATQRQDPAAAQEGEDEGASAGQGPKPEADSQEQGHPQTGCECEDGPDGQEMDPPNPEEVKTPEEGEKQSQC.

The segment at 1 to 117 (MSWRGRSTYY…PEEGEKQSQC (117 aa)) is disordered. Acidic residues-rich tracts occupy residues 32-45 (FSDE…EEGE) and 87-96 (ECEDGPDGQE). Residues 103–117 (EEVKTPEEGEKQSQC) show a composition bias toward basic and acidic residues.

Belongs to the GAGE family. As to expression, expressed in a variety of tumor tissues but not in normal tissues, except testis.

The chain is G antigen 5 (GAGE5) from Homo sapiens (Human).